The chain runs to 320 residues: Dermonecrotic toxin LarSicTox-alphaIB2a (320 aa).

Residues 1-15 form the signal peptide; sequence MSHSSTALLHPYVAA. A propeptide spanning residues 16–41 is cleaved from the precursor; that stretch reads RATEKFAPIYFFCHPLQSAETDVAER. Residue H52 is part of the active site. Residues E72 and D74 each coordinate Mg(2+). The active-site Nucleophile is H88. 2 disulfides stabilise this stretch: C92/C98 and C94/C237. Residue D132 coordinates Mg(2+). N-linked (GlcNAc...) asparagine glycosylation occurs at N297.

It belongs to the arthropod phospholipase D family. Class II subfamily. Requires Mg(2+) as cofactor. In terms of tissue distribution, expressed by the venom gland.

It localises to the secreted. The catalysed reaction is an N-(acyl)-sphingosylphosphocholine = an N-(acyl)-sphingosyl-1,3-cyclic phosphate + choline. It catalyses the reaction an N-(acyl)-sphingosylphosphoethanolamine = an N-(acyl)-sphingosyl-1,3-cyclic phosphate + ethanolamine. It carries out the reaction a 1-acyl-sn-glycero-3-phosphocholine = a 1-acyl-sn-glycero-2,3-cyclic phosphate + choline. The enzyme catalyses a 1-acyl-sn-glycero-3-phosphoethanolamine = a 1-acyl-sn-glycero-2,3-cyclic phosphate + ethanolamine. In terms of biological role, dermonecrotic toxins cleave the phosphodiester linkage between the phosphate and headgroup of certain phospholipids (sphingolipid and lysolipid substrates), forming an alcohol (often choline) and a cyclic phosphate. This toxin acts on sphingomyelin (SM). It may also act on ceramide phosphoethanolamine (CPE), lysophosphatidylcholine (LPC) and lysophosphatidylethanolamine (LPE), but not on lysophosphatidylserine (LPS), and lysophosphatidylglycerol (LPG). It acts by transphosphatidylation, releasing exclusively cyclic phosphate products as second products. Induces dermonecrosis, hemolysis, increased vascular permeability, edema, inflammatory response, and platelet aggregation. This chain is Dermonecrotic toxin LarSicTox-alphaIB2a, found in Loxosceles arizonica (Arizona brown spider).